Here is a 274-residue protein sequence, read N- to C-terminus: MAIVKCKPTSPGRRHVVKVVNADLHKGKPYAPLLEKNSKNGGRNNNGRITVRHIGGGHKHHYRLVDFKRTKDGIPAKVERLEYDPNRSANIALVLYADGERRYIIAPKGVNAGDQIQSGVDAAIKAGNTLPMRNIPVGSTVHCVELKPGKGAQLARSAGAYAQIIARDGAYVTIRLRSGEMRKVLSEGRATIGEVGNSEHMLRELGKAGASRWRGVRPTVRGVVMNPVDHPHGGGEGRTSGGRHPVSPWGVPTKGFKTRKNKRTDKYIVRRRTK.

The disordered stretch occupies residues 223-274 (VVMNPVDHPHGGGEGRTSGGRHPVSPWGVPTKGFKTRKNKRTDKYIVRRRTK). Residues 256–274 (FKTRKNKRTDKYIVRRRTK) show a composition bias toward basic residues.

This sequence belongs to the universal ribosomal protein uL2 family. As to quaternary structure, part of the 50S ribosomal subunit. Forms a bridge to the 30S subunit in the 70S ribosome.

One of the primary rRNA binding proteins. Required for association of the 30S and 50S subunits to form the 70S ribosome, for tRNA binding and peptide bond formation. It has been suggested to have peptidyltransferase activity; this is somewhat controversial. Makes several contacts with the 16S rRNA in the 70S ribosome. The polypeptide is Large ribosomal subunit protein uL2 (Vibrio atlanticus (strain LGP32) (Vibrio splendidus (strain Mel32))).